The primary structure comprises 293 residues: Aromatic amino acid exporter YddG (293 aa).

Over 1 to 6 (MTRQKA) the chain is Cytoplasmic. Residues 6 to 137 (ATLIGLIAIV…LALVGVCWVL (132 aa)) form the EamA 1 domain. Residues 7–27 (TLIGLIAIVLWSTMVGLIRGV) form a helical membrane-spanning segment. Topologically, residues 28–33 (SEGLGP) are periplasmic. Residues 34-54 (VGGAAAIYSLSGLLLIFTVGF) traverse the membrane as a helical segment. At 55–62 (PRIRQIPK) the chain is on the cytoplasmic side. The helical transmembrane segment at 63–83 (GYLLAGSLLFVSYEICLALSL) threads the bilayer. Residues 84–92 (GYAATHHQA) lie on the Periplasmic side of the membrane. A helical transmembrane segment spans residues 93–113 (IEVGMVNYLWPSLTILFAILF). The Cytoplasmic segment spans residues 114–118 (NGQKT). Residues 119–139 (NWLIVPGLLLALVGVCWVLGG) traverse the membrane as a helical segment. At 140-155 (DNGLHYDEIINNITTS) the chain is on the periplasmic side. A helical membrane pass occupies residues 156–176 (PLSYFLAFIGAFIWAAYCTVT). Residues 158–285 (SYFLAFIGAF…ALMVCGGSLL (128 aa)) form the EamA 2 domain. At 177-182 (NKYARG) the chain is on the cytoplasmic side. A helical transmembrane segment spans residues 183 to 203 (FNGITVFVLLTGASLWVYYFL). At 204-218 (TPQPEMIFSTPVMIK) the chain is on the periplasmic side. Residues 219 to 239 (LISAAFTLGFAYAAWNVGILH) form a helical membrane-spanning segment. The Cytoplasmic segment spans residues 240 to 243 (GNVT). The helical transmembrane segment at 244–264 (IMAVGSYFTPVLSSALAAVLL) threads the bilayer. Residues 265–267 (SAP) lie on the Periplasmic side of the membrane. Residues 268-288 (LSFSFWQGALMVCGGSLLCWL) form a helical membrane-spanning segment. At 289–293 (ATRRG) the chain is on the cytoplasmic side.

Belongs to the drug/metabolite transporter (DMT) superfamily. Aromatic amino acid/paraquat exporter (ArAA/P-E) (TC 2.A.7.17) family.

Its subcellular location is the cell inner membrane. It catalyses the reaction L-phenylalanine(in) = L-phenylalanine(out). It carries out the reaction L-tyrosine(in) = L-tyrosine(out). The catalysed reaction is L-tryptophan(in) = L-tryptophan(out). The enzyme catalyses L-threonine(in) = L-threonine(out). It catalyses the reaction L-methionine(in) = L-methionine(out). It carries out the reaction L-lysine(in) = L-lysine(out). The catalysed reaction is L-glutamate(out) = L-glutamate(in). The enzyme catalyses L-valine(in) = L-valine(out). It catalyses the reaction L-isoleucine(in) = L-isoleucine(out). In terms of biological role, amino acid transporter with broad substrate specificity. Can transport various amino acids, including phenylalanine, tyrosine, tryptophan, L-threonine, L-methionine, L-lysine, L-glutamate, L-valine and L-isoleucine. Overexpression confers resistance to phenylalanine and increases export of phenylalanine, tyrosine and tryptophan. The polypeptide is Aromatic amino acid exporter YddG (yddG) (Escherichia coli (strain K12)).